A 47-amino-acid polypeptide reads, in one-letter code: Defensin-like protein 1 (47 aa).

Intrachain disulfides connect Cys3-Cys47, Cys14-Cys36, Cys20-Cys41, and Cys24-Cys43.

This sequence belongs to the DEFL family. Protease inhibitor I18 (RTI/MTI-2) subfamily.

The sequence is that of Defensin-like protein 1 from Sorghum bicolor (Sorghum).